Consider the following 449-residue polypeptide: Phosphoglucosamine mutase (449 aa).

Ser104 serves as the catalytic Phosphoserine intermediate. Residues Ser104, Asp243, Asp245, and Asp247 each contribute to the Mg(2+) site. The residue at position 104 (Ser104) is a Phosphoserine.

Belongs to the phosphohexose mutase family. Mg(2+) serves as cofactor. Activated by phosphorylation.

The catalysed reaction is alpha-D-glucosamine 1-phosphate = D-glucosamine 6-phosphate. Its function is as follows. Catalyzes the conversion of glucosamine-6-phosphate to glucosamine-1-phosphate. The protein is Phosphoglucosamine mutase of Xanthomonas euvesicatoria pv. vesicatoria (strain 85-10) (Xanthomonas campestris pv. vesicatoria).